Reading from the N-terminus, the 792-residue chain is Protein SEY1 homolog 2 (792 aa).

Topologically, residues 1–638 are cytoplasmic; the sequence is MEQIITGDGA…NIKAQANREQ (638 aa). Residues 28-245 enclose the GB1/RHD3-type G domain; sequence GVDYHTVAII…LKDYLFAEKS (218 aa). 38–45 contributes to the GTP binding site; it reads GPQSSGKS. Residues 639-659 form a helical membrane-spanning segment; it reads IPGWAWLATFLCSSNYIMKLL. Residues 660-662 are Lumenal-facing; sequence ANP. The chain crosses the membrane as a helical span at residues 663-683; the sequence is IFFALAVIIGGIYSILRMLGL. Topologically, residues 684 to 792 are cytoplasmic; it reads QDVAKKTLLD…LTRTQSLEFM (109 aa). Residues 691-718 adopt a coiled-coil conformation; sequence LLDKFNSLLKNLTKDENEQEKEGEENEE. The tract at residues 703–792 is disordered; that stretch reads TKDENEQEKE…LTRTQSLEFM (90 aa). Positions 707 to 723 are enriched in acidic residues; that stretch reads NEQEKEGEENEEPEEDQ. 2 stretches are compositionally biased toward polar residues: residues 739-751 and 764-774; these read SVSQ…SIYK and IPQTSPLGNND.

The protein belongs to the TRAFAC class dynamin-like GTPase superfamily. GB1/RHD3 GTPase family. RHD3 subfamily.

The protein resides in the endoplasmic reticulum membrane. Functionally, probable GTP-binding protein that may be involved in cell development. The protein is Protein SEY1 homolog 2 of Trichomonas vaginalis (strain ATCC PRA-98 / G3).